The primary structure comprises 95 residues: Small ribosomal subunit protein bS18 (95 aa).

The protein belongs to the bacterial ribosomal protein bS18 family. As to quaternary structure, part of the 30S ribosomal subunit. Forms a tight heterodimer with protein bS6.

In terms of biological role, binds as a heterodimer with protein bS6 to the central domain of the 16S rRNA, where it helps stabilize the platform of the 30S subunit. The protein is Small ribosomal subunit protein bS18 of Acidiphilium cryptum (strain JF-5).